Reading from the N-terminus, the 87-residue chain is Large ribosomal subunit protein bL31B (87 aa).

This sequence belongs to the bacterial ribosomal protein bL31 family. Type B subfamily. In terms of assembly, part of the 50S ribosomal subunit.

The chain is Large ribosomal subunit protein bL31B from Escherichia coli O8 (strain IAI1).